Here is a 679-residue protein sequence, read N- to C-terminus: Glycine--tRNA ligase beta subunit (679 aa).

It belongs to the class-II aminoacyl-tRNA synthetase family. As to quaternary structure, tetramer of two alpha and two beta subunits.

It localises to the cytoplasm. The catalysed reaction is tRNA(Gly) + glycine + ATP = glycyl-tRNA(Gly) + AMP + diphosphate. This is Glycine--tRNA ligase beta subunit from Streptococcus uberis (strain ATCC BAA-854 / 0140J).